The primary structure comprises 608 residues: UvrABC system protein C (608 aa).

The 79-residue stretch at 13-91 (HKPGVYIMHD…IKKNSPKYNI (79 aa)) folds into the GIY-YIG domain. The UVR domain maps to 202-237 (DELTKKLTDKMMAASKNLNFELAAKLRDSITNIQVI).

This sequence belongs to the UvrC family. Interacts with UvrB in an incision complex.

It is found in the cytoplasm. Functionally, the UvrABC repair system catalyzes the recognition and processing of DNA lesions. UvrC both incises the 5' and 3' sides of the lesion. The N-terminal half is responsible for the 3' incision and the C-terminal half is responsible for the 5' incision. The protein is UvrABC system protein C of Finegoldia magna (strain ATCC 29328 / DSM 20472 / WAL 2508) (Peptostreptococcus magnus).